Consider the following 251-residue polypeptide: ATP synthase subunit a, chloroplastic (251 aa).

The next 6 membrane-spanning stretches (helical) occupy residues 3–23, 38–58, 99–119, 138–158, 203–223, and 224–244; these read IVLL…IANV, IHGQ…FLSI, VPYI…GALI, INTT…AGLN, LVVA…LIFL, and GLFT…SYIG.

The protein belongs to the ATPase A chain family. In terms of assembly, F-type ATPases have 2 components, CF(1) - the catalytic core - and CF(0) - the membrane proton channel. CF(1) has five subunits: alpha(3), beta(3), gamma(1), delta(1), epsilon(1). CF(0) has four main subunits: a, b, b' and c.

The protein resides in the plastid. The protein localises to the chloroplast thylakoid membrane. Its function is as follows. Key component of the proton channel; it plays a direct role in the translocation of protons across the membrane. The protein is ATP synthase subunit a, chloroplastic of Euglena gracilis.